Consider the following 300-residue polypeptide: MALYELTNLLSIDDLTNEQILNLIKRAIDIKENNNQIKRDDLYVANLFFENSTRTKMSFVVAQNKLGLKSIDFEVSTSSVNKGETLYDTCKTLEMIGVNMLVIRHSQKQYYKELENLEIPIINGGDGSGEHPTQCLLDLMTIYEKFKSFEGLKIAIVGDIKNSRVAKSNYKALTKLGAIVHFVAPDKFKDDEFNNYKEFDEIINEIDVCMLLRVQHERHESQDKTQEFINIYHQQHGLSLPRYNKLKENAIVMHPAPVNRGVEIDTTLVESDKSVIFLQMKNGMFMRQAVLEYIIAENNL.

Carbamoyl phosphate is bound by residues arginine 54 and threonine 55. L-aspartate is bound at residue lysine 82. 3 residues coordinate carbamoyl phosphate: arginine 104, histidine 131, and glutamine 134. 2 residues coordinate L-aspartate: arginine 164 and arginine 213. Alanine 256 and proline 257 together coordinate carbamoyl phosphate.

The protein belongs to the aspartate/ornithine carbamoyltransferase superfamily. ATCase family. Heterododecamer (2C3:3R2) of six catalytic PyrB chains organized as two trimers (C3), and six regulatory PyrI chains organized as three dimers (R2).

It catalyses the reaction carbamoyl phosphate + L-aspartate = N-carbamoyl-L-aspartate + phosphate + H(+). Its pathway is pyrimidine metabolism; UMP biosynthesis via de novo pathway; (S)-dihydroorotate from bicarbonate: step 2/3. Its function is as follows. Catalyzes the condensation of carbamoyl phosphate and aspartate to form carbamoyl aspartate and inorganic phosphate, the committed step in the de novo pyrimidine nucleotide biosynthesis pathway. The sequence is that of Aspartate carbamoyltransferase catalytic subunit from Malacoplasma penetrans (strain HF-2) (Mycoplasma penetrans).